Consider the following 74-residue polypeptide: DNA-directed RNA polymerase subunit omega (74 aa).

This sequence belongs to the RNA polymerase subunit omega family. In terms of assembly, the RNAP catalytic core consists of 2 alpha, 1 beta, 1 beta' and 1 omega subunit. When a sigma factor is associated with the core the holoenzyme is formed, which can initiate transcription.

The catalysed reaction is RNA(n) + a ribonucleoside 5'-triphosphate = RNA(n+1) + diphosphate. Its function is as follows. Promotes RNA polymerase assembly. Latches the N- and C-terminal regions of the beta' subunit thereby facilitating its interaction with the beta and alpha subunits. This chain is DNA-directed RNA polymerase subunit omega, found in Helicobacter pylori (strain P12).